The sequence spans 592 residues: Glutamine-rich protein 2 (592 aa).

Residues 488–592 (QLQQAQHARP…TRGPRSTAAH (105 aa)) are disordered. Residues 544–567 (LQSNVSHSSIPTDIASLQGSQQGL) show a composition bias toward polar residues.

As to quaternary structure, interacts with AKAP3, ODF2 and TSSK4. Interacts with AKAP4. As to expression, expressed in testis. Not detected in heart, brain, kidney, stomach, ovary, liver, lung and uterus.

It is found in the nucleus membrane. It localises to the nucleus. The protein resides in the cytoplasm. Its subcellular location is the cell projection. The protein localises to the cilium. It is found in the flagellum. Functionally, has an essential role in the formation of sperm flagella and flagellar structure maintainance. It acts as a suppressor of ubiquitination and degradation of proteins involved in flagellar development and motility. The polypeptide is Glutamine-rich protein 2 (Mus musculus (Mouse)).